Consider the following 512-residue polypeptide: Solute carrier family 2, facilitated glucose transporter member 7 (512 aa).

Residues 1–21 are Cytoplasmic-facing; that stretch reads MENKEAGTPPPIPSREGRLQP. Residues 22-42 traverse the membrane as a helical segment; the sequence is TLLLATLSAAFGSAFQYGYNL. The Extracellular portion of the chain corresponds to 43-78; it reads SVVNTPHKVFKSFYNETYFERHATFMDGKLMLLLWS. Asn-57 carries N-linked (GlcNAc...) asparagine glycosylation. Residues 79–99 traverse the membrane as a helical segment; it reads CTVSMFPLGGLLGSLLVGLLV. Topologically, residues 100 to 107 are cytoplasmic; that stretch reads DSCGRKGT. The helical transmembrane segment at 108–128 threads the bilayer; it reads LLINNIFAIIPAILMGVSKVA. Residues 129–138 lie on the Extracellular side of the membrane; sequence KAFELIVFSR. A helical membrane pass occupies residues 139–159; it reads VVLGVCAGISYSALPMYLGEL. Residues 160 to 172 are Cytoplasmic-facing; it reads APKNLRGMVGTMT. A helical membrane pass occupies residues 173-193; it reads EVFVIVGVFLAQIFSLQAILG. The Extracellular portion of the chain corresponds to 194–198; sequence NPAGW. The chain crosses the membrane as a helical span at residues 199–219; it reads PVLLALTGVPALLQLLTLPFF. The Cytoplasmic segment spans residues 220–281; it reads PESPRYSLIQ…LHLCALRSLR (62 aa). A helical membrane pass occupies residues 282–302; that stretch reads WQLLSIIVLMAGQQLSGINAI. D-glucose is bound by residues 294 to 295 and Asn-300; that span reads QQ. The Extracellular portion of the chain corresponds to 303-321; that stretch reads NYYADTIYTSAGVEAAHSQ. The helical transmembrane segment at 322–342 threads the bilayer; it reads YVTVGSGVVNIVMTITSAVLV. Asn-331 is a D-glucose binding site. Over 343-350 the chain is Cytoplasmic; it reads ERLGRRHL. Residues 351–371 traverse the membrane as a helical segment; it reads LLAGYGICGSACLVLTVVLLF. The Extracellular portion of the chain corresponds to 372-379; it reads QNRVPELS. The chain crosses the membrane as a helical span at residues 380–400; it reads YLGIICVFAYIAGHSIGPSPV. Residues 401-415 lie on the Cytoplasmic side of the membrane; that stretch reads PSVVRTEIFLQSSRR. Residues 416 to 436 form a helical membrane-spanning segment; it reads AAFMVDGAVHWLTNFIIGFLF. Residues 437 to 445 are Extracellular-facing; that stretch reads PSIQEAIGA. Residues 446-466 traverse the membrane as a helical segment; sequence YSFIIFAGICLLTAIYIYVVI. The Cytoplasmic portion of the chain corresponds to 467–512; that stretch reads PETKGKTFVEINRIFAKRNRVKLPEEKEETIDAGPPTASPAKETSF. Positions 491–512 are disordered; it reads EEKEETIDAGPPTASPAKETSF.

Belongs to the major facilitator superfamily. Sugar transporter (TC 2.A.1.1) family. Glucose transporter subfamily. As to expression, expressed in small intestine and colon. Weakly expressed in testis and prostate.

It is found in the cell membrane. The protein resides in the apical cell membrane. The catalysed reaction is D-glucose(out) = D-glucose(in). The enzyme catalyses D-fructose(out) = D-fructose(in). Glucose and fructose transport are inhibited by the flavonoid apigenin. In terms of biological role, probable sugar transporter. Even if its physiological substrate is subject to discussion, it is able to transport glucose and fructose. Does not transport galactose, 2-deoxy-d-glucose and xylose. This chain is Solute carrier family 2, facilitated glucose transporter member 7, found in Homo sapiens (Human).